The chain runs to 686 residues: Proprotein convertase subtilisin/kexin type 9 (686 aa).

A signal peptide spans 1–28 (MGTVSSRRLWWPLPLLLLLLLGPAGTRA). A propeptide spanning residues 29-150 (QEDDDDDYEE…IEEDSSVFAQ (122 aa)) is cleaved from the precursor. Sulfotyrosine is present on Tyr36. Ser45 is modified (phosphoserine). The Inhibitor I9 domain occupies 75–147 (TYVVVLKEET…VDYIEEDSSV (73 aa)). A Peptidase S8 domain is found at 153-459 (PWNLERITPA…GWQLFCRTVW (307 aa)). Active-site charge relay system residues include Asp184 and His224. 2 disulfide bridges follow: Cys221–Cys253 and Cys321–Cys356. The active-site Charge relay system is the Ser384. Residues 448 to 686 (GEGWQLFCRT…CRSQHLAQAS (239 aa)) form a C-terminal domain region. 3 cysteine pairs are disulfide-bonded: Cys455–Cys525, Cys475–Cys524, and Cys484–Cys507. An N-linked (GlcNAc...) asparagine glycan is attached at Asn531. 6 cysteine pairs are disulfide-bonded: Cys532–Cys599, Cys550–Cys598, Cys560–Cys586, Cys606–Cys677, Cys624–Cys676, and Cys633–Cys652. Ser686 carries the post-translational modification Phosphoserine.

This sequence belongs to the peptidase S8 family. In terms of assembly, monomer. Can self-associate to form dimers and higher multimers which may have increased LDLR degrading activity. The precursor protein but not the mature protein may form multimers. Interacts with APOB, VLDLR, LRP8/APOER2 and BACE1. The full-length immature form (pro-PCSK9) interacts with SCNN1A, SCNN1B and SCNN1G. The pro-PCSK9 form (via C-terminal domain) interacts with LDLR. Interacts (via the C-terminal domain) with ANXA2 (via repeat Annexin 1); the interaction inhibits the degradation of LDLR. It depends on Ca(2+) as a cofactor. Cleavage by furin and PCSK5 generates a truncated inactive protein that is unable to induce LDLR degradation. In terms of processing, undergoes autocatalytic cleavage in the endoplasmic reticulum to release the propeptide from the N-terminus and the cleavage of the propeptide is strictly required for its maturation and activation. The cleaved propeptide however remains associated with the catalytic domain through non-covalent interactions, preventing potential substrates from accessing its active site. As a result, it is secreted from cells as a propeptide-containing, enzymatically inactive protein. Post-translationally, phosphorylation protects the propeptide against proteolysis.

Its subcellular location is the cytoplasm. It is found in the secreted. It localises to the endosome. The protein resides in the lysosome. The protein localises to the cell surface. Its subcellular location is the endoplasmic reticulum. It is found in the golgi apparatus. Its proteolytic activity is autoinhibited by the non-covalent binding of the propeptide to the catalytic domain. Inhibited by EGTA. In terms of biological role, crucial player in the regulation of plasma cholesterol homeostasis. Binds to low-density lipid receptor family members: low density lipoprotein receptor (LDLR), very low density lipoprotein receptor (VLDLR), apolipoprotein E receptor (LRP1/APOER) and apolipoprotein receptor 2 (LRP8/APOER2), and promotes their degradation in intracellular acidic compartments. Acts via a non-proteolytic mechanism to enhance the degradation of the hepatic LDLR through a clathrin LDLRAP1/ARH-mediated pathway. May prevent the recycling of LDLR from endosomes to the cell surface or direct it to lysosomes for degradation. Can induce ubiquitination of LDLR leading to its subsequent degradation. Inhibits intracellular degradation of APOB via the autophagosome/lysosome pathway in a LDLR-independent manner. Involved in the disposal of non-acetylated intermediates of BACE1 in the early secretory pathway. Inhibits epithelial Na(+) channel (ENaC)-mediated Na(+) absorption by reducing ENaC surface expression primarily by increasing its proteasomal degradation. Regulates neuronal apoptosis via modulation of LRP8/APOER2 levels and related anti-apoptotic signaling pathways. The polypeptide is Proprotein convertase subtilisin/kexin type 9 (PCSK9) (Saguinus labiatus (Red-chested mustached tamarin)).